The following is a 958-amino-acid chain: Glycine dehydrogenase (decarboxylating) (958 aa).

Lys-708 carries the N6-(pyridoxal phosphate)lysine modification.

This sequence belongs to the GcvP family. As to quaternary structure, the glycine cleavage system is composed of four proteins: P, T, L and H. Pyridoxal 5'-phosphate serves as cofactor.

It carries out the reaction N(6)-[(R)-lipoyl]-L-lysyl-[glycine-cleavage complex H protein] + glycine + H(+) = N(6)-[(R)-S(8)-aminomethyldihydrolipoyl]-L-lysyl-[glycine-cleavage complex H protein] + CO2. Functionally, the glycine cleavage system catalyzes the degradation of glycine. The P protein binds the alpha-amino group of glycine through its pyridoxal phosphate cofactor; CO(2) is released and the remaining methylamine moiety is then transferred to the lipoamide cofactor of the H protein. This Proteus mirabilis (strain HI4320) protein is Glycine dehydrogenase (decarboxylating).